Reading from the N-terminus, the 119-residue chain is Large ribosomal subunit protein uL18 (119 aa).

This sequence belongs to the universal ribosomal protein uL18 family. Part of the 50S ribosomal subunit; part of the 5S rRNA/L5/L18/L25 subcomplex. Contacts the 5S and 23S rRNAs.

This is one of the proteins that bind and probably mediate the attachment of the 5S RNA into the large ribosomal subunit, where it forms part of the central protuberance. This Mycoplasmoides gallisepticum (strain R(low / passage 15 / clone 2)) (Mycoplasma gallisepticum) protein is Large ribosomal subunit protein uL18.